The chain runs to 271 residues: Protein phosphatase 1 regulatory subunit 3B-B (271 aa).

The short motif at 56 to 59 (RVSF) is the PP1-binding motif element. Residues 119–227 (RNRLKADSVC…SNKGLNYRIV (109 aa)) form the CBM21 domain.

In terms of assembly, interacts with glycogen, PPP1CC catalytic subunit of PP1 and PYGL. Associates with glycogen particles. Forms complexes with debranching enzyme, glycogen phosphorylase, glycogen synthase and phosphorylase kinase which is necessary for its regulation of PP1 activity.

Functionally, acts as a glycogen-targeting subunit for phosphatase PP1. Facilitates interaction of the PP1 with enzymes of the glycogen metabolism and regulates its activity. Suppresses the rate at which PP1 dephosphorylates (inactivates) glycogen phosphorylase and enhances the rate at which it activates glycogen synthase and therefore limits glycogen breakdown. The polypeptide is Protein phosphatase 1 regulatory subunit 3B-B (ppp1r3b-b) (Xenopus laevis (African clawed frog)).